The primary structure comprises 376 residues: Anhydro-N-acetylmuramic acid kinase (376 aa).

22-29 serves as a coordination point for ATP; the sequence is GTSMDGAD.

It belongs to the anhydro-N-acetylmuramic acid kinase family.

It carries out the reaction 1,6-anhydro-N-acetyl-beta-muramate + ATP + H2O = N-acetyl-D-muramate 6-phosphate + ADP + H(+). The protein operates within amino-sugar metabolism; 1,6-anhydro-N-acetylmuramate degradation. It functions in the pathway cell wall biogenesis; peptidoglycan recycling. In terms of biological role, catalyzes the specific phosphorylation of 1,6-anhydro-N-acetylmuramic acid (anhMurNAc) with the simultaneous cleavage of the 1,6-anhydro ring, generating MurNAc-6-P. Is required for the utilization of anhMurNAc either imported from the medium or derived from its own cell wall murein, and thus plays a role in cell wall recycling. The chain is Anhydro-N-acetylmuramic acid kinase from Neisseria gonorrhoeae (strain NCCP11945).